The following is a 370-amino-acid chain: MTVDAVRVELGARAYEVRIGPGLIARAGAEIAPLLRRPKVAILTDETVAGLHLDPFRQALVEAGIASSALALPAGEATKGWPQFARAVEWLLEEKVERRDVVVALGGGVIGDLAGFAAAVLRRGVRFVQVPTTLLAQVDSSVGGKTGINTAQGKNLVGAFHQPSLVLADIGVLETLPPRDFRAGYGEVVKYGLLGDADFYEWLEGAGPRLAADAEARQRAVRRSVEMKAEIVARDETEEGDRALLNLGHTFCHALEKATGYSDRLLHGEGVAIGCALAFELSQRLGLCAQEAPSRLRAHLRAMGMKVDLRDIPGDLPSAEALLALMAQDKKVVDGKLRFILARGIGQAFVADDVPGDVVRALLEDALAER.

NAD(+) contacts are provided by residues 108 to 112, 132 to 133, K145, and K154; these read GVIGD and TT. Positions 187, 249, and 267 each coordinate Zn(2+).

It belongs to the sugar phosphate cyclases superfamily. Dehydroquinate synthase family. Co(2+) is required as a cofactor. The cofactor is Zn(2+). It depends on NAD(+) as a cofactor.

The protein resides in the cytoplasm. The enzyme catalyses 7-phospho-2-dehydro-3-deoxy-D-arabino-heptonate = 3-dehydroquinate + phosphate. It functions in the pathway metabolic intermediate biosynthesis; chorismate biosynthesis; chorismate from D-erythrose 4-phosphate and phosphoenolpyruvate: step 2/7. Functionally, catalyzes the conversion of 3-deoxy-D-arabino-heptulosonate 7-phosphate (DAHP) to dehydroquinate (DHQ). The polypeptide is 3-dehydroquinate synthase (Cereibacter sphaeroides (strain KD131 / KCTC 12085) (Rhodobacter sphaeroides)).